A 256-amino-acid chain; its full sequence is Type III pantothenate kinase (256 aa).

An ATP-binding site is contributed by 6-13 (DIGNTHTV). Residues Y100 and 107-110 (GADR) each bind substrate. The active-site Proton acceptor is the D109. K(+) is bound at residue D129. An ATP-binding site is contributed by T132. T184 is a binding site for substrate.

The protein belongs to the type III pantothenate kinase family. Homodimer. It depends on NH4(+) as a cofactor. K(+) serves as cofactor.

The protein resides in the cytoplasm. It carries out the reaction (R)-pantothenate + ATP = (R)-4'-phosphopantothenate + ADP + H(+). Its pathway is cofactor biosynthesis; coenzyme A biosynthesis; CoA from (R)-pantothenate: step 1/5. Its function is as follows. Catalyzes the phosphorylation of pantothenate (Pan), the first step in CoA biosynthesis. The sequence is that of Type III pantothenate kinase from Acidothermus cellulolyticus (strain ATCC 43068 / DSM 8971 / 11B).